A 435-amino-acid chain; its full sequence is Chromosomal replication initiator protein DnaA (435 aa).

Residues 1-70 are domain I, interacts with DnaA modulators; the sequence is MNIGEKILLL…KHLFEIQNSI (70 aa). Residues 70–98 are domain II; the sequence is IKVDVSILLKNQVESKKAEQKSVQKQQHS. Positions 99–313 are domain III, AAA+ region; that stretch reads LLNPSHTFEN…GILSKLHAYS (215 aa). Residues G143, G145, K146, and T147 each coordinate ATP. The tract at residues 314 to 435 is domain IV, binds dsDNA; sequence QLMHVDIDLQ…ELTNKITSSS (122 aa).

The protein belongs to the DnaA family. As to quaternary structure, oligomerizes as a right-handed, spiral filament on DNA at oriC.

Its subcellular location is the cytoplasm. Its function is as follows. Plays an essential role in the initiation and regulation of chromosomal replication. ATP-DnaA binds to the origin of replication (oriC) to initiate formation of the DNA replication initiation complex once per cell cycle. Binds the DnaA box (a 9 base pair repeat at the origin) and separates the double-stranded (ds)DNA. Forms a right-handed helical filament on oriC DNA; dsDNA binds to the exterior of the filament while single-stranded (ss)DNA is stabiized in the filament's interior. The ATP-DnaA-oriC complex binds and stabilizes one strand of the AT-rich DNA unwinding element (DUE), permitting loading of DNA polymerase. After initiation quickly degrades to an ADP-DnaA complex that is not apt for DNA replication. Binds acidic phospholipids. The protein is Chromosomal replication initiator protein DnaA of Sulfurimonas denitrificans (strain ATCC 33889 / DSM 1251) (Thiomicrospira denitrificans (strain ATCC 33889 / DSM 1251)).